The sequence spans 92 residues: UPF0298 protein BH2594 (92 aa).

This sequence belongs to the UPF0298 family.

Its subcellular location is the cytoplasm. This Halalkalibacterium halodurans (strain ATCC BAA-125 / DSM 18197 / FERM 7344 / JCM 9153 / C-125) (Bacillus halodurans) protein is UPF0298 protein BH2594.